The chain runs to 128 residues: Transcription antitermination protein NusB (128 aa).

The protein belongs to the NusB family.

In terms of biological role, involved in transcription antitermination. Required for transcription of ribosomal RNA (rRNA) genes. Binds specifically to the boxA antiterminator sequence of the ribosomal RNA (rrn) operons. The polypeptide is Transcription antitermination protein NusB (Listeria innocua serovar 6a (strain ATCC BAA-680 / CLIP 11262)).